A 348-amino-acid polypeptide reads, in one-letter code: Dihydroorotase (348 aa).

His-14 and His-16 together coordinate Zn(2+). Substrate is bound by residues 16-18 and Asn-42; that span reads HLR. The Zn(2+) site is built by Lys-100, His-137, and His-175. Lys-100 is subject to N6-carboxylysine. His-137 lines the substrate pocket. Substrate is bound at residue Leu-220. Residue Asp-248 participates in Zn(2+) binding. Asp-248 is a catalytic residue. His-252 and Ala-264 together coordinate substrate.

It belongs to the metallo-dependent hydrolases superfamily. DHOase family. Class II DHOase subfamily. As to quaternary structure, homodimer. Requires Zn(2+) as cofactor.

The catalysed reaction is (S)-dihydroorotate + H2O = N-carbamoyl-L-aspartate + H(+). It participates in pyrimidine metabolism; UMP biosynthesis via de novo pathway; (S)-dihydroorotate from bicarbonate: step 3/3. In terms of biological role, catalyzes the reversible cyclization of carbamoyl aspartate to dihydroorotate. This chain is Dihydroorotase, found in Pseudomonas aeruginosa (strain ATCC 15692 / DSM 22644 / CIP 104116 / JCM 14847 / LMG 12228 / 1C / PRS 101 / PAO1).